Here is a 270-residue protein sequence, read N- to C-terminus: uncharacterized protein (270 aa).

Positions 1-22 (MEYIKKIALYMSVLLLIIFIGG) are cleaved as a signal peptide. A lipid anchor (N-palmitoyl cysteine) is attached at Cys23. Cys23 carries S-diacylglycerol cysteine lipidation.

It belongs to the staphylococcal tandem lipoprotein family.

The protein localises to the cell membrane. This is an uncharacterized protein from Staphylococcus aureus (strain N315).